Reading from the N-terminus, the 196-residue chain is Inosine triphosphate pyrophosphatase 1 (196 aa).

20-25 (TGNDGK) is an ITP binding site. A Mg(2+)-binding site is contributed by Glu-48. ITP is bound by residues Lys-61, 77–78 (DT), Lys-94, 153–156 (FGWD), Lys-177, and 182–183 (PR).

Belongs to the HAM1 NTPase family. Homodimer. Requires Mg(2+) as cofactor. Mn(2+) is required as a cofactor.

It is found in the cytoplasm. The catalysed reaction is ITP + H2O = IMP + diphosphate + H(+). It carries out the reaction dITP + H2O = dIMP + diphosphate + H(+). It catalyses the reaction XTP + H2O = XMP + diphosphate + H(+). Pyrophosphatase that hydrolyzes non-canonical purine nucleotides such as inosine triphosphate (ITP), deoxyinosine triphosphate (dITP) or xanthosine 5'-triphosphate (XTP) to their respective monophosphate derivatives. The enzyme does not distinguish between the deoxy- and ribose forms. Probably excludes non-canonical purines from RNA and DNA precursor pools, thus preventing their incorporation into RNA and DNA and avoiding chromosomal lesions. This is Inosine triphosphate pyrophosphatase 1 from Trypanosoma cruzi (strain CL Brener).